The chain runs to 511 residues: Glutamyl-tRNA(Gln) amidotransferase subunit A, mitochondrial (511 aa).

Residues Lys72 and Ser149 each act as charge relay system in the active site. Catalysis depends on Ser173, which acts as the Acyl-ester intermediate.

This sequence belongs to the amidase family. GatA subfamily. In terms of assembly, subunit of the heterotrimeric GatCAB amidotransferase (AdT) complex, composed of A, B and C subunits.

The protein resides in the mitochondrion. The enzyme catalyses L-glutamyl-tRNA(Gln) + L-glutamine + ATP + H2O = L-glutaminyl-tRNA(Gln) + L-glutamate + ADP + phosphate + H(+). In terms of biological role, allows the formation of correctly charged Gln-tRNA(Gln) through the transamidation of misacylated Glu-tRNA(Gln) in the mitochondria. The reaction takes place in the presence of glutamine and ATP through an activated gamma-phospho-Glu-tRNA(Gln). The protein is Glutamyl-tRNA(Gln) amidotransferase subunit A, mitochondrial of Fusarium vanettenii (strain ATCC MYA-4622 / CBS 123669 / FGSC 9596 / NRRL 45880 / 77-13-4) (Fusarium solani subsp. pisi).